Consider the following 324-residue polypeptide: NADH-ubiquinone oxidoreductase chain 1 (324 aa).

The next 8 membrane-spanning stretches (helical) occupy residues 9 to 29 (LINP…LTLL), 76 to 96 (LFLV…APMP), 106 to 126 (LGVL…LGSG), 146 to 166 (ISYE…WGGY), 177 to 197 (ALWL…STLA), 228 to 248 (LLFL…AILF), 259 to 279 (ELTT…FLWV), and 299 to 319 (FLPL…AFAG).

This sequence belongs to the complex I subunit 1 family.

It is found in the mitochondrion inner membrane. The catalysed reaction is a ubiquinone + NADH + 5 H(+)(in) = a ubiquinol + NAD(+) + 4 H(+)(out). Core subunit of the mitochondrial membrane respiratory chain NADH dehydrogenase (Complex I) that is believed to belong to the minimal assembly required for catalysis. Complex I functions in the transfer of electrons from NADH to the respiratory chain. The immediate electron acceptor for the enzyme is believed to be ubiquinone. The chain is NADH-ubiquinone oxidoreductase chain 1 (MT-ND1) from Formosania lacustris (Oriental stream loach).